A 221-amino-acid chain; its full sequence is Small ribosomal subunit protein uS2c (221 aa).

Belongs to the universal ribosomal protein uS2 family.

It is found in the plastid. Its subcellular location is the chloroplast. This is Small ribosomal subunit protein uS2c (rps2) from Cyanidioschyzon merolae (strain NIES-3377 / 10D) (Unicellular red alga).